Reading from the N-terminus, the 906-residue chain is Protein translocase subunit SecA (906 aa).

Residues Gln-89, 107–111 (GEGKT), and Asp-502 each bind ATP. Zn(2+) contacts are provided by Cys-890, Cys-892, Cys-901, and His-902.

This sequence belongs to the SecA family. In terms of assembly, monomer and homodimer. Part of the essential Sec protein translocation apparatus which comprises SecA, SecYEG and auxiliary proteins SecDF-YajC and YidC. Zn(2+) is required as a cofactor.

The protein localises to the cell inner membrane. The protein resides in the cytoplasm. It carries out the reaction ATP + H2O + cellular proteinSide 1 = ADP + phosphate + cellular proteinSide 2.. Its function is as follows. Part of the Sec protein translocase complex. Interacts with the SecYEG preprotein conducting channel. Has a central role in coupling the hydrolysis of ATP to the transfer of proteins into and across the cell membrane, serving both as a receptor for the preprotein-SecB complex and as an ATP-driven molecular motor driving the stepwise translocation of polypeptide chains across the membrane. This is Protein translocase subunit SecA from Brucella canis (strain ATCC 23365 / NCTC 10854 / RM-666).